The following is a 183-amino-acid chain: Cell division protein SepF (183 aa).

Residues 13–58 (MHDDDDFDDDYEDYDDDFDEDYEDDKPSARKRLFTGSSKKDSVADE) form a disordered region. Over residues 16-36 (DDDFDDDYEDYDDDFDEDYED) the composition is skewed to acidic residues.

Belongs to the SepF family. In terms of assembly, homodimer. Interacts with FtsZ.

The protein resides in the cytoplasm. In terms of biological role, cell division protein that is part of the divisome complex and is recruited early to the Z-ring. Probably stimulates Z-ring formation, perhaps through the cross-linking of FtsZ protofilaments. Its function overlaps with FtsA. In Lachnospira eligens (strain ATCC 27750 / DSM 3376 / VPI C15-48 / C15-B4) (Eubacterium eligens), this protein is Cell division protein SepF.